The primary structure comprises 137 residues: Large ribosomal subunit protein bL17 (137 aa).

Belongs to the bacterial ribosomal protein bL17 family. In terms of assembly, part of the 50S ribosomal subunit. Contacts protein L32.

In Bradyrhizobium sp. (strain ORS 278), this protein is Large ribosomal subunit protein bL17.